Here is a 511-residue protein sequence, read N- to C-terminus: Chromosomal replication initiator protein DnaA (511 aa).

A domain I, interacts with DnaA modulators region spans residues 1-87 (MSVELWQQCV…IGSKRSSAPR (87 aa)). The domain II stretch occupies residues 87-174 (RAAPNAPLAA…QVEGALKHTS (88 aa)). The segment at 133 to 160 (VATHDEPSRDSFDPMAGASSQQAPARAE) is disordered. The segment covering 134–144 (ATHDEPSRDSF) has biased composition (basic and acidic residues). Residues 175-391 (YLNRTFTFEN…GALKRVIAHS (217 aa)) form a domain III, AAA+ region region. Positions 219, 221, 222, and 223 each coordinate ATP. Residues 392–511 (HFMGRDITIE…YKNLLRTLTT (120 aa)) are domain IV, binds dsDNA.

This sequence belongs to the DnaA family. In terms of assembly, oligomerizes as a right-handed, spiral filament on DNA at oriC.

It is found in the cytoplasm. Functionally, plays an essential role in the initiation and regulation of chromosomal replication. ATP-DnaA binds to the origin of replication (oriC) to initiate formation of the DNA replication initiation complex once per cell cycle. Binds the DnaA box (a 9 base pair repeat at the origin) and separates the double-stranded (ds)DNA. Forms a right-handed helical filament on oriC DNA; dsDNA binds to the exterior of the filament while single-stranded (ss)DNA is stabiized in the filament's interior. The ATP-DnaA-oriC complex binds and stabilizes one strand of the AT-rich DNA unwinding element (DUE), permitting loading of DNA polymerase. After initiation quickly degrades to an ADP-DnaA complex that is not apt for DNA replication. Binds acidic phospholipids. This Pseudomonas syringae pv. tomato (strain ATCC BAA-871 / DC3000) protein is Chromosomal replication initiator protein DnaA.